Here is a 216-residue protein sequence, read N- to C-terminus: MTATRNVKGLLGTKLGMTQVWDENNKLIPVTVVQADSNVITQLRNADVDGYVAVQIGYGQIDPRKVTKPLAGHFEKAGVTPRRHVVELRTADAAEYELGQELSVEVFEAGQKIDVVGTTKGKGFAGVMKRHGFHGVGASHGAHKNHRKPGSIGGASTPSRVFKGMKMAGRMGAVRHTTLNLTVHAVDVEKSLLLIKGAVPGARGQVVLVRTAVKGA.

The tract at residues 137-158 (GASHGAHKNHRKPGSIGGASTP) is disordered.

It belongs to the universal ribosomal protein uL3 family. Part of the 50S ribosomal subunit. Forms a cluster with proteins L14 and L19.

In terms of biological role, one of the primary rRNA binding proteins, it binds directly near the 3'-end of the 23S rRNA, where it nucleates assembly of the 50S subunit. This chain is Large ribosomal subunit protein uL3, found in Arthrobacter sp. (strain FB24).